The chain runs to 360 residues: CFA/I fimbrial subunit E (360 aa).

The protein resides in the fimbrium. In Escherichia coli, this protein is CFA/I fimbrial subunit E (cfaE).